We begin with the raw amino-acid sequence, 126 residues long: Fluoride-specific ion channel FluC (126 aa).

The next 4 helical transmembrane spans lie at 4 to 24, 35 to 55, 68 to 88, and 100 to 120; these read ILAI…IGLW, YGTF…LTLI, MLVT…YESF, and IGYM…GVGL. G75 and T78 together coordinate Na(+).

Belongs to the fluoride channel Fluc/FEX (TC 1.A.43) family.

The protein localises to the cell membrane. It catalyses the reaction fluoride(in) = fluoride(out). Na(+) is not transported, but it plays an essential structural role and its presence is essential for fluoride channel function. Fluoride-specific ion channel. Important for reducing fluoride concentration in the cell, thus reducing its toxicity. The chain is Fluoride-specific ion channel FluC from Chloroflexus aurantiacus (strain ATCC 29366 / DSM 635 / J-10-fl).